The following is a 2057-amino-acid chain: Protein TIC 214 (2057 aa).

4 consecutive transmembrane segments (helical) span residues 13–33 (KIIN…AFSI), 62–82 (LIMG…HIAL), 158–178 (LFVT…CEFF), and 206–226 (SDYF…HSFG). The stretch at 248–340 (LILKGTDEEE…RVIQEKERKS (93 aa)) forms a coiled coil. The span at 288 to 302 (NHLKKKKDRQKKQGT) shows a compositional bias: basic residues. Disordered regions lie at residues 288–316 (NHLK…NSNT), 614–807 (ETHT…EEKG), 890–910 (DEQT…NDRV), 1597–1634 (EEEE…TNND), and 1724–1817 (KKKN…KSLS). 2 stretches are compositionally biased toward basic and acidic residues: residues 621–657 (ATDK…KETK) and 665–702 (NTVD…KETK). The span at 704–713 (NASKETNTVN) shows a compositional bias: polar residues. Basic and acidic residues-rich tracts occupy residues 714–807 (KETK…EEKG) and 891–900 (EQTKREEKPK). The segment covering 1597–1619 (EEEEINPEEEINPEEEINPEEEI) has biased composition (acidic residues). The span at 1622-1634 (SSNQKTPIGTNND) shows a compositional bias: polar residues. The span at 1753–1817 (TNSEKKSKTN…ETDSEKKSLS (65 aa)) shows a compositional bias: basic and acidic residues.

It belongs to the TIC214 family. Part of the Tic complex.

The protein localises to the plastid. Its subcellular location is the chloroplast inner membrane. Involved in protein precursor import into chloroplasts. May be part of an intermediate translocation complex acting as a protein-conducting channel at the inner envelope. This is Protein TIC 214 from Ipomoea purpurea (Common morning glory).